The sequence spans 1172 residues: Tudor domain-containing protein 1 (1172 aa).

Disordered stretches follow at residues 1-59 (MMPR…KNNF) and 72-136 (QEDS…KKSH). Composition is skewed to low complexity over residues 75–86 (SSVVSSNPAVVN) and 103–117 (NPVSPLSLGNSSPPN). Over residues 118–129 (QVKTKPSSNVTP) the composition is skewed to polar residues. Cys163, Cys166, Cys174, Cys177, Cys183, Cys187, His195, and Cys199 together coordinate Zn(2+). The MYND-type zinc finger occupies 163–199 (CHRCGLFGSLRCSQCKQTYYCSTACQRRDWSSHSTIC). Tudor domains follow at residues 307-367 (LPVK…LDLF), 536-595 (YPTI…LLDL), 756-815 (KAEI…FLLL), and 982-1040 (RPRT…HLEL).

The protein belongs to the TDRD1 family. In terms of assembly, found in a mRNP complex, at least composed of TDRD1, TDRD6, TDRD7 and DDX4. Interacts with MAEL. Interacts with PIWIL1, PIWIL2 and PIWIL4 (when methylated on arginine residues). Interacts with TDRD12. Testis and ovary specific. Present in germ-line cells and is most abundant in fetal prospermatogonia and postnatal primary spermatocytes (at protein level).

The protein resides in the cytoplasm. Functionally, plays a central role during spermatogenesis by participating in the repression transposable elements and preventing their mobilization, which is essential for the germline integrity. Acts via the piRNA metabolic process, which mediates the repression of transposable elements during meiosis by forming complexes composed of piRNAs and Piwi proteins and governs the methylation and subsequent repression of transposons. Required for the localization of Piwi proteins to the meiotic nuage. Involved in the piRNA metabolic process by ensuring the entry of correct transcripts into the normal piRNA pool and limiting the entry of cellular transcripts into the piRNA pathway. May act by allowing the recruitment of piRNA biogenesis or loading factors that ensure the correct entry of transcripts and piRNAs into Piwi proteins. The polypeptide is Tudor domain-containing protein 1 (Tdrd1) (Mus musculus (Mouse)).